A 493-amino-acid polypeptide reads, in one-letter code: Glutamate--tRNA ligase (493 aa).

The 'HIGH' region motif lies at 10 to 20; sequence PSPTGFVHIGS. The Zn(2+) site is built by cysteine 114, cysteine 116, cysteine 141, and glutamate 143. Positions 258–262 match the 'KMSKS' region motif; it reads KLSKR. Lysine 261 contributes to the ATP binding site.

The protein belongs to the class-I aminoacyl-tRNA synthetase family. Glutamate--tRNA ligase type 1 subfamily. As to quaternary structure, monomer. It depends on Zn(2+) as a cofactor.

The protein localises to the cytoplasm. It carries out the reaction tRNA(Glu) + L-glutamate + ATP = L-glutamyl-tRNA(Glu) + AMP + diphosphate. In terms of biological role, catalyzes the attachment of glutamate to tRNA(Glu) in a two-step reaction: glutamate is first activated by ATP to form Glu-AMP and then transferred to the acceptor end of tRNA(Glu). The polypeptide is Glutamate--tRNA ligase (Alkaliphilus metalliredigens (strain QYMF)).